Consider the following 358-residue polypeptide: UDP-N-acetylglucosamine--N-acetylmuramyl-(pentapeptide) pyrophosphoryl-undecaprenol N-acetylglucosamine transferase (358 aa).

Residues Arg166, Ser196, and Gln291 each contribute to the UDP-N-acetyl-alpha-D-glucosamine site.

Belongs to the glycosyltransferase 28 family. MurG subfamily.

It is found in the cell membrane. The catalysed reaction is Mur2Ac(oyl-L-Ala-gamma-D-Glu-L-Lys-D-Ala-D-Ala)-di-trans,octa-cis-undecaprenyl diphosphate + UDP-N-acetyl-alpha-D-glucosamine = beta-D-GlcNAc-(1-&gt;4)-Mur2Ac(oyl-L-Ala-gamma-D-Glu-L-Lys-D-Ala-D-Ala)-di-trans,octa-cis-undecaprenyl diphosphate + UDP + H(+). Its pathway is cell wall biogenesis; peptidoglycan biosynthesis. Cell wall formation. Catalyzes the transfer of a GlcNAc subunit on undecaprenyl-pyrophosphoryl-MurNAc-pentapeptide (lipid intermediate I) to form undecaprenyl-pyrophosphoryl-MurNAc-(pentapeptide)GlcNAc (lipid intermediate II). The chain is UDP-N-acetylglucosamine--N-acetylmuramyl-(pentapeptide) pyrophosphoryl-undecaprenol N-acetylglucosamine transferase from Staphylococcus saprophyticus subsp. saprophyticus (strain ATCC 15305 / DSM 20229 / NCIMB 8711 / NCTC 7292 / S-41).